The following is a 497-amino-acid chain: Ammonium transporter 1 (497 aa).

At 1-32 (MSSTTDATPTPSGVNGGDSMTVNLNQFYNNGD) the chain is on the extracellular side. The chain crosses the membrane as a helical span at residues 33–53 (VAWILTSTALVFIMIPGVGFF). Topologically, residues 54–63 (YSGLARRRSA) are cytoplasmic. A helical membrane pass occupies residues 64 to 84 (ISMLFLSMMSVAIVAFQWFFW). Residues 85-122 (GYSLTFSHEGGPYIGSLANFGLRQTLGRPSSGASSVPD) are Extracellular-facing. A helical membrane pass occupies residues 123 to 143 (ILFCVFQGMFAAITPALAIGA). At 144-150 (AADRGRM) the chain is on the cytoplasmic side. A helical transmembrane segment spans residues 151–171 (FPCMVFMFLWTSIVYDPIAFW). Topologically, residues 172–187 (TWNPNGWLNKLGSYDF) are extracellular. Residues 188-208 (AGGSPVHISSGMAALAYSIVI) traverse the membrane as a helical segment. The Cytoplasmic segment spans residues 209 to 223 (GKRCDHGTTKYRPHN). A helical membrane pass occupies residues 224 to 244 (VPHVVLGTVFLWFGWFGFNGG). Over 245–253 (SSAAANMRG) the chain is Extracellular. The helical transmembrane segment at 254–274 (VMAVVVTHLAASVGGIVWCVI) threads the bilayer. Residues 275-281 (DFAKNRH) are Cytoplasmic-facing. The chain crosses the membrane as a helical span at residues 282–302 (WSVVGFCEGAVAGLVAITPGS). Position 303 (Gly-303) is a topological domain, extracellular. The helical transmembrane segment at 304 to 324 (FVPPWAAVVIGALGAVFCYAA) threads the bilayer. Over 325-338 (TYLKKIIRVDDALD) the chain is Cytoplasmic. A helical transmembrane segment spans residues 339–359 (IFAEHGVGGMVGNILTALFAA). At 360 to 394 (DYIEALDGSGTAYTGGWITHHYIQLGYQLADTVSC) the chain is on the extracellular side. A helical transmembrane segment spans residues 395–415 (AAYSFAVSCALLFVMNYIPGL). Residues 416–497 (SLRVSREDEV…AESEAQAPAI (82 aa)) lie on the Cytoplasmic side of the membrane. A disordered region spans residues 440-497 (YKDSTDEPPPITTSGVQYTSPTVSDSASNEKEQEHRAQNEAQKEEEYRAESEAQAPAI). Residues 451–466 (TTSGVQYTSPTVSDSA) show a composition bias toward polar residues. The segment covering 467–490 (SNEKEQEHRAQNEAQKEEEYRAES) has biased composition (basic and acidic residues).

The protein belongs to the ammonia transporter channel (TC 1.A.11.2) family.

The protein localises to the membrane. Transporter for ammonium to use as a nitrogen source. Under ammonium limitation acts as an ammonium sensor, generating a signal that leads to pseudohyphal growth. This chain is Ammonium transporter 1 (amt1), found in Schizosaccharomyces pombe (strain 972 / ATCC 24843) (Fission yeast).